Consider the following 54-residue polypeptide: MKAAFVLALCASLASAWVVITPITKEMVVDRSPDDCFFGVVTPQGCGPLRGPAK.

Residues 1–16 form the signal peptide; that stretch reads MKAAFVLALCASLASA. Cysteine 36 and cysteine 46 are joined by a disulfide.

The protein belongs to the MC69 virulence factor family.

It is found in the secreted. Its function is as follows. Secreted protein required for appressorial penetration of intact host epidermal cells and for pathogenicity. The polypeptide is Secreted virulence factor MC69 (Pyricularia oryzae (strain 70-15 / ATCC MYA-4617 / FGSC 8958) (Rice blast fungus)).